The following is a 490-amino-acid chain: Argininosuccinate lyase (490 aa).

Disordered regions lie at residues 426–452 (DPES…LSAA) and 469–490 (ALAT…TAPE). A compositionally biased stretch (low complexity) spans 440–452 (PAPESMAAALSAA). The span at 469–480 (ALATAADERERV) shows a compositional bias: basic and acidic residues.

The protein belongs to the lyase 1 family. Argininosuccinate lyase subfamily.

It localises to the cytoplasm. The catalysed reaction is 2-(N(omega)-L-arginino)succinate = fumarate + L-arginine. It participates in amino-acid biosynthesis; L-arginine biosynthesis; L-arginine from L-ornithine and carbamoyl phosphate: step 3/3. This Natronomonas pharaonis (strain ATCC 35678 / DSM 2160 / CIP 103997 / JCM 8858 / NBRC 14720 / NCIMB 2260 / Gabara) (Halobacterium pharaonis) protein is Argininosuccinate lyase.